A 242-amino-acid chain; its full sequence is Methylthioribulose-1-phosphate dehydratase (242 aa).

A Phosphoserine modification is found at S87. A substrate-binding site is contributed by C97. Zn(2+) is bound by residues H115 and H117. E139 (proton donor/acceptor) is an active-site residue. H195 is a binding site for Zn(2+).

Belongs to the aldolase class II family. MtnB subfamily. As to quaternary structure, homotetramer. Interacts with APAF1. May interact with CASP1. Zn(2+) is required as a cofactor. As to expression, isoform 1 is ubiquitously expressed. Isoform 2 is expressed at lower levels and detected in heart, brain, pancreas, liver, placenta, skeletal muscle and kidney.

It localises to the cytoplasm. The enzyme catalyses 5-(methylsulfanyl)-D-ribulose 1-phosphate = 5-methylsulfanyl-2,3-dioxopentyl phosphate + H2O. Its pathway is amino-acid biosynthesis; L-methionine biosynthesis via salvage pathway; L-methionine from S-methyl-5-thio-alpha-D-ribose 1-phosphate: step 2/6. Catalyzes the dehydration of methylthioribulose-1-phosphate (MTRu-1-P) into 2,3-diketo-5-methylthiopentyl-1-phosphate (DK-MTP-1-P). Functions in the methionine salvage pathway, which plays a key role in cancer, apoptosis, microbial proliferation and inflammation. May inhibit the CASP1-related inflammatory response (pyroptosis), the CASP9-dependent apoptotic pathway and the cytochrome c-dependent and APAF1-mediated cell death. In Homo sapiens (Human), this protein is Methylthioribulose-1-phosphate dehydratase.